Reading from the N-terminus, the 200-residue chain is Dephospho-CoA kinase (200 aa).

The region spanning 3 to 200 is the DPCK domain; sequence RIGLTGGIGS…LIAEILSRVN (198 aa). 11-16 is a binding site for ATP; it reads GSGKST.

The protein belongs to the CoaE family.

It localises to the cytoplasm. The catalysed reaction is 3'-dephospho-CoA + ATP = ADP + CoA + H(+). It participates in cofactor biosynthesis; coenzyme A biosynthesis; CoA from (R)-pantothenate: step 5/5. Functionally, catalyzes the phosphorylation of the 3'-hydroxyl group of dephosphocoenzyme A to form coenzyme A. The chain is Dephospho-CoA kinase from Corynebacterium glutamicum (strain ATCC 13032 / DSM 20300 / JCM 1318 / BCRC 11384 / CCUG 27702 / LMG 3730 / NBRC 12168 / NCIMB 10025 / NRRL B-2784 / 534).